Consider the following 271-residue polypeptide: 3'-phosphoadenosine 5'-phosphate phosphatase (271 aa).

Mg(2+) is bound by residues glutamate 73, aspartate 91, leucine 93, aspartate 94, and aspartate 216. Glutamate 73 is a binding site for substrate. Substrate-binding positions include 93 to 96 (LDGT) and aspartate 216.

This sequence belongs to the inositol monophosphatase superfamily. Homodimer. It depends on Mg(2+) as a cofactor.

It carries out the reaction adenosine 3',5'-bisphosphate + H2O = AMP + phosphate. It catalyses the reaction beta-D-fructose 1,6-bisphosphate + H2O = beta-D-fructose 6-phosphate + phosphate. The enzyme catalyses a myo-inositol phosphate + H2O = myo-inositol + phosphate. It participates in sulfur metabolism; sulfate assimilation. Phosphatase with a broad specificity. Its primary physiological function is to dephosphorylate 3'-phosphoadenosine 5'-phosphate (PAP) and 3'-phosphoadenosine 5'-phosphosulfate (PAPS). Thus, plays a role in mycobacterial sulfur metabolism, since it can serve as a key regulator of the sulfate assimilation pathway by controlling the pools of PAP and PAPS in the cell. To a lesser extent, is also able to hydrolyze inositol 1-phosphate (I-1-P), fructose 1,6-bisphosphate (FBP) (to fructose 6-phosphate (F-6-P)) and AMP in vitro, but this might not be significant in vivo. This Mycobacterium leprae (strain TN) protein is 3'-phosphoadenosine 5'-phosphate phosphatase (cysQ).